We begin with the raw amino-acid sequence, 452 residues long: UDP-glycosyltransferase 76D1 (452 aa).

Residues Ser-269, 329–331, 346–354, and 368–371 each bind UDP-alpha-D-glucose; these read APQ, HGGWNSCLE, and SGDQ.

The protein belongs to the UDP-glycosyltransferase family.

Its function is as follows. Possesses low quercetin 7-O-glucosyltransferase activity in vitro. The chain is UDP-glycosyltransferase 76D1 (UGT76D1) from Arabidopsis thaliana (Mouse-ear cress).